The sequence spans 721 residues: WD repeat and coiled-coil-containing protein (721 aa).

M1 carries the post-translational modification N-acetylmethionine. WD repeat units follow at residues 55-98 and 154-194; these read GQFE…MESS and NTQG…LHRC. Residues S299, S468, S501, and S523 each carry the phosphoserine modification. A compositionally biased stretch (polar residues) spans 520–537; that stretch reads QPASLPRHSSTPDHTSTL. Residues 520 to 553 are disordered; sequence QPASLPRHSSTPDHTSTLEPPRLPQRKNLQSEKE. The residue at position 530 (T530) is a Phosphothreonine. The interval 539-545 is interaction with HCK; sequence PPRLPQR. Positions 556 to 584 form a coiled coil; that stretch reads QLSKEVEILSRNLVEMQRCLSELTNRLHN. S686 and S690 each carry phosphoserine.

As to quaternary structure, oligomer. Interacts with HCK (via SH3 domain). Post-translationally, phosphorylated on Tyr when associated with HCK.

The chain is WD repeat and coiled-coil-containing protein from Homo sapiens (Human).